The primary structure comprises 734 residues: Photosystem I P700 chlorophyll a apoprotein A2 (734 aa).

A run of 8 helical transmembrane segments spans residues 46 to 69, 135 to 158, 175 to 199, 273 to 291, 330 to 353, 369 to 395, 417 to 439, and 517 to 535; these read IFAS…FHVA, LYTG…LHLQ, LNHH…HVAI, IAHH…GHMY, IHFQ…QHMY, AALY…IFFI, AIIS…LYVH, and FLVH…LILV. Residues cysteine 559 and cysteine 568 each coordinate [4Fe-4S] cluster. Transmembrane regions (helical) follow at residues 575-596 and 643-665; these read AFYL…YWHW and LSVW…MFLI. Positions 654, 662, and 670 each coordinate chlorophyll a. Tryptophan 671 is a phylloquinone binding site. The chain crosses the membrane as a helical span at residues 707-727; sequence LVGLAHFSVGYIFTYAAFLIA.

This sequence belongs to the PsaA/PsaB family. As to quaternary structure, the PsaA/B heterodimer binds the P700 chlorophyll special pair and subsequent electron acceptors. PSI consists of a core antenna complex that captures photons, and an electron transfer chain that converts photonic excitation into a charge separation. The eukaryotic PSI reaction center is composed of at least 11 subunits. It depends on P700 is a chlorophyll a/chlorophyll a' dimer, A0 is one or more chlorophyll a, A1 is one or both phylloquinones and FX is a shared 4Fe-4S iron-sulfur center. as a cofactor.

Its subcellular location is the plastid. It localises to the chloroplast thylakoid membrane. It carries out the reaction reduced [plastocyanin] + hnu + oxidized [2Fe-2S]-[ferredoxin] = oxidized [plastocyanin] + reduced [2Fe-2S]-[ferredoxin]. In terms of biological role, psaA and PsaB bind P700, the primary electron donor of photosystem I (PSI), as well as the electron acceptors A0, A1 and FX. PSI is a plastocyanin-ferredoxin oxidoreductase, converting photonic excitation into a charge separation, which transfers an electron from the donor P700 chlorophyll pair to the spectroscopically characterized acceptors A0, A1, FX, FA and FB in turn. Oxidized P700 is reduced on the lumenal side of the thylakoid membrane by plastocyanin. This is Photosystem I P700 chlorophyll a apoprotein A2 from Eucalyptus globulus subsp. globulus (Tasmanian blue gum).